Here is a 137-residue protein sequence, read N- to C-terminus: Large ribosomal subunit protein uL16 (137 aa).

The protein belongs to the universal ribosomal protein uL16 family. In terms of assembly, part of the 50S ribosomal subunit.

In terms of biological role, binds 23S rRNA and is also seen to make contacts with the A and possibly P site tRNAs. The sequence is that of Large ribosomal subunit protein uL16 from Magnetococcus marinus (strain ATCC BAA-1437 / JCM 17883 / MC-1).